The following is a 575-amino-acid chain: Flagellin A (575 aa).

3 tandem repeats follow at residues 405–409 (GSGFS), 411–415 (GSGFS), and 447–450 (GSGF).

The protein belongs to the bacterial flagellin family. As to quaternary structure, heteromer of flaA and flaB.

It localises to the secreted. The protein localises to the bacterial flagellum. In terms of biological role, flagellin is the subunit protein which polymerizes to form the filaments of bacterial flagella. This chain is Flagellin A (flaA), found in Campylobacter jejuni.